The sequence spans 102 residues: Monothiol glutaredoxin-S7 (102 aa).

Residues methionine 1–tryptophan 101 enclose the Glutaredoxin domain. Cysteine 21 contacts [2Fe-2S] cluster. The short motif at alanine 99–leucine 102 is the Responsive for interaction with TGA factors element.

It belongs to the glutaredoxin family. CC-type subfamily.

The protein resides in the cytoplasm. Its subcellular location is the nucleus. In terms of biological role, may only reduce GSH-thiol disulfides, but not protein disulfides. The chain is Monothiol glutaredoxin-S7 (GRXS7) from Arabidopsis thaliana (Mouse-ear cress).